The following is a 331-amino-acid chain: Gamma-parvin (331 aa).

Position 1 is an N-acetylmethionine (methionine 1). The disordered stretch occupies residues glutamine 18–lysine 38. 2 Calponin-homology (CH) domains span residues glutamate 44 to glutamine 151 and histidine 210 to serine 317.

It belongs to the parvin family. In terms of assembly, interacts with ILK; the interaction promotes the establishment of cell polarity required for leukocyte migration. Interacts with ARHGEF6; the guanine nucleotide exchange factor activity of ARHGEF6 is essential for the PARVG-induced enhancement of cell spreading. Expressed strongly in spleen and testis, moderately in lung and weakly in brain and heart.

The protein localises to the cell junction. It localises to the focal adhesion. It is found in the cell membrane. Its subcellular location is the cytoplasm. The protein resides in the cytoskeleton. In terms of biological role, plays a role with ILK in promoting the cell adhesion and spreading of leukocytes. In Mus musculus (Mouse), this protein is Gamma-parvin (Parvg).